The sequence spans 228 residues: Orotate phosphoribosyltransferase (228 aa).

Lys-26 is a 5-phospho-alpha-D-ribose 1-diphosphate binding site. 34 to 35 contacts orotate; it reads FF. Residues 72–73, Arg-98, Lys-99, Lys-102, His-104, and 123–131 contribute to the 5-phospho-alpha-D-ribose 1-diphosphate site; these read YK and DDVISAGTS. The orotate site is built by Ser-127 and Arg-155.

This sequence belongs to the purine/pyrimidine phosphoribosyltransferase family. PyrE subfamily. Homodimer. The cofactor is Mg(2+).

The catalysed reaction is orotidine 5'-phosphate + diphosphate = orotate + 5-phospho-alpha-D-ribose 1-diphosphate. It participates in pyrimidine metabolism; UMP biosynthesis via de novo pathway; UMP from orotate: step 1/2. In terms of biological role, catalyzes the transfer of a ribosyl phosphate group from 5-phosphoribose 1-diphosphate to orotate, leading to the formation of orotidine monophosphate (OMP). The chain is Orotate phosphoribosyltransferase from Nitrosospira multiformis (strain ATCC 25196 / NCIMB 11849 / C 71).